Reading from the N-terminus, the 131-residue chain is MATVPTRSGSPRQLTTKQTGDAWEVQARRWLEGKGLRFIAANVNERGGEIDLIMREGRTTVFVEVRYRRSALYGGAAASVTRSKQHKLLQTARLWLARHNGSFDTVDCRFDVVAFTGNEVEWIKDAFNDHS.

The span at 1 to 19 (MATVPTRSGSPRQLTTKQT) shows a compositional bias: polar residues. The tract at residues 1–20 (MATVPTRSGSPRQLTTKQTG) is disordered.

The protein belongs to the UPF0102 family.

The polypeptide is UPF0102 protein YraN (Escherichia coli O17:K52:H18 (strain UMN026 / ExPEC)).